The primary structure comprises 590 residues: Ovarian abundant message protein (590 aa).

The segment at 1 to 71 is disordered; it reads MQGTDNAPPG…SPGQPLVEEQ (71 aa). Residues 18-29 show a composition bias toward basic residues; sequence SPRRIRHVRRHY. A run of 27 repeats spans residues 66–71, 72–77, 78–83, 84–89, 90–95, 96–101, 102–107, 108–113, 114–119, 120–125, 126–131, 132–137, 138–143, 144–149, 150–155, 156–161, 162–167, 168–173, 174–179, 180–185, 300–305, 306–311, 312–317, 318–323, 324–329, 330–335, and 336–341. The interval 66–185 is 20 X 6 AA tandem repeats of P-[LP]-V-[EG]-[EG]-[QR]; sequence PLVEEQPLVE…VEGQPLVEGQ (120 aa). Positions 300–347 are 8 X 6 AA approximate tandem repeats of P-L-A-[GV]-[AV]-[PL]; the sequence is PLAGAPPLAGVPPLAVALPLAGAPPLAGVPPLAGAPPLAGALPRAGVL. The 2-8; approximate repeat unit spans residues 342 to 347; that stretch reads PRAGVL. Tandem repeats lie at residues 348–353, 354–359, 360–365, 366–371, 372–377, 378–383, 384–389, 390–395, 396–401, 402–407, 408–413, 419–424, 425–430, 431–436, 437–442, and 443–448. The tract at residues 348–413 is 11 X 6 AA tandem repeats of approximate R-R-A-[GD]-V-[LV]; that stretch reads RRAGVLRRAG…ADVLRRADVV (66 aa). Positions 419-454 are 6 X 6 AA approximate tandem repeats of Q-[QR]-L-A-D-V; sequence QQLADVQRLADVQRLADVQRLADVQRLADVQRLVCV. The 4-6; approximate repeat unit spans residues 449-454; that stretch reads QRLVCV.

As to expression, somatic ovarian tissue.

This is Ovarian abundant message protein (OAM) from Ascaris suum (Pig roundworm).